Consider the following 224-residue polypeptide: Uracil-DNA glycosylase (224 aa).

The active-site Proton acceptor is aspartate 64.

This sequence belongs to the uracil-DNA glycosylase (UDG) superfamily. UNG family.

It is found in the cytoplasm. The catalysed reaction is Hydrolyzes single-stranded DNA or mismatched double-stranded DNA and polynucleotides, releasing free uracil.. In terms of biological role, excises uracil residues from the DNA which can arise as a result of misincorporation of dUMP residues by DNA polymerase or due to deamination of cytosine. The sequence is that of Uracil-DNA glycosylase from Clostridioides difficile (strain 630) (Peptoclostridium difficile).